Consider the following 197-residue polypeptide: RING-H2 finger protein ATL80 (197 aa).

A helical transmembrane segment spans residues 30–50 (LVVILAALLCALICVLGLIAV). The RING-type; atypical zinc-finger motif lies at 111–153 (CAICLAEFSAGDELRVLPQCGHGFHVACIDTWLGSHSSCPSCR). The disordered stretch occupies residues 168 to 197 (PGSSSSGLESEPEIEIRIKQGEDDPNSFLP).

The protein belongs to the RING-type zinc finger family. ATL subfamily.

The protein resides in the membrane. The catalysed reaction is S-ubiquitinyl-[E2 ubiquitin-conjugating enzyme]-L-cysteine + [acceptor protein]-L-lysine = [E2 ubiquitin-conjugating enzyme]-L-cysteine + N(6)-ubiquitinyl-[acceptor protein]-L-lysine.. It functions in the pathway protein modification; protein ubiquitination. May be involved in the early steps of the plant defense signaling pathway. In Arabidopsis thaliana (Mouse-ear cress), this protein is RING-H2 finger protein ATL80 (ATL80).